Consider the following 338-residue polypeptide: Putative transposase for insertion sequence element IS4SA (338 aa).

This sequence belongs to the transposase 11 family.

This is Putative transposase for insertion sequence element IS4SA from Synechocystis sp. (strain ATCC 27184 / PCC 6803 / Kazusa).